Reading from the N-terminus, the 276-residue chain is Diaminopimelate epimerase (276 aa).

Asparagine 13, glutamine 46, and asparagine 66 together coordinate substrate. The active-site Proton donor is cysteine 75. Substrate contacts are provided by residues 76 to 77 (GN), asparagine 159, asparagine 192, and 210 to 211 (ER). The active-site Proton acceptor is the cysteine 219. 220–221 (GT) is a binding site for substrate.

Belongs to the diaminopimelate epimerase family. In terms of assembly, homodimer.

Its subcellular location is the cytoplasm. The catalysed reaction is (2S,6S)-2,6-diaminopimelate = meso-2,6-diaminopimelate. The protein operates within amino-acid biosynthesis; L-lysine biosynthesis via DAP pathway; DL-2,6-diaminopimelate from LL-2,6-diaminopimelate: step 1/1. Functionally, catalyzes the stereoinversion of LL-2,6-diaminopimelate (L,L-DAP) to meso-diaminopimelate (meso-DAP), a precursor of L-lysine and an essential component of the bacterial peptidoglycan. The polypeptide is Diaminopimelate epimerase (Pseudoalteromonas translucida (strain TAC 125)).